The chain runs to 93 residues: Integration host factor subunit beta (93 aa).

This sequence belongs to the bacterial histone-like protein family. As to quaternary structure, heterodimer of an alpha and a beta chain.

Functionally, this protein is one of the two subunits of integration host factor, a specific DNA-binding protein that functions in genetic recombination as well as in transcriptional and translational control. The chain is Integration host factor subunit beta from Rhodospirillum centenum (strain ATCC 51521 / SW).